Here is a 463-residue protein sequence, read N- to C-terminus: L-seryl-tRNA(Sec) selenium transferase (463 aa).

Lys295 carries the post-translational modification N6-(pyridoxal phosphate)lysine.

This sequence belongs to the SelA family. As to quaternary structure, homodecamer; pentamer of dimers. Binds only one seryl-tRNA(Sec) per dimer. Pyridoxal 5'-phosphate serves as cofactor.

It is found in the cytoplasm. The catalysed reaction is L-seryl-tRNA(Sec) + selenophosphate + H(+) = L-selenocysteinyl-tRNA(Sec) + phosphate. Its pathway is aminoacyl-tRNA biosynthesis; selenocysteinyl-tRNA(Sec) biosynthesis; selenocysteinyl-tRNA(Sec) from L-seryl-tRNA(Sec) (bacterial route): step 1/1. In terms of biological role, converts seryl-tRNA(Sec) to selenocysteinyl-tRNA(Sec) required for selenoprotein biosynthesis. This Escherichia coli O81 (strain ED1a) protein is L-seryl-tRNA(Sec) selenium transferase.